The primary structure comprises 241 residues: uncharacterized protein (241 aa).

A Cupin type-2 domain is found at 22–78 (SHKHAYSQFLFPLEGSIDLETEGRQVKLNPDHFLYIPPQCEHRFRSIGRNECLVLDV). Residues 137-235 (YASIAYIHSH…GMPPRLYRNT (99 aa)) form the HTH araC/xylS-type domain. 2 DNA-binding regions (H-T-H motif) span residues 154–175 (KKLA…KKQT) and 202–225 (LTVV…TKST).

This is an uncharacterized protein from Bacillus subtilis (strain 168).